A 93-amino-acid polypeptide reads, in one-letter code: uncharacterized protein (93 aa).

The helical transmembrane segment at 68-88 threads the bilayer; the sequence is WLVTVVLANGVVSLFLLGGLI.

It localises to the membrane. This is an uncharacterized protein from Mycoplasma pneumoniae (strain ATCC 29342 / M129 / Subtype 1) (Mycoplasmoides pneumoniae).